The primary structure comprises 319 residues: Alpha-hemolysin (319 aa).

The signal sequence occupies residues 1-26; sequence MKTRIVSSVTTTLLLGSILMNPVAGA.

The protein belongs to the aerolysin family. Self-assembles to first form a non-lytic oligomeric intermediate, and then, a mushroom-shaped homoheptamer structure of 100 Angstroms in length and up to 100 Angstroms in diameter. Interacts with human ADAM10; this interaction is required for toxin pore formation, disruption of focal adhesions, and hly-mediated cytotoxicity.

Its subcellular location is the secreted. In terms of biological role, alpha-toxin binds to the membrane of eukaryotic cells (particularly red blood cells, RBC) forming pores, resulting in hemolysis, with the release of low-molecular weight molecules leading to eventual osmotic RBC lysis. Human RBCs bind much less alpha-toxin than do rabbit RBCs. Heptamer oligomerization and pore formation is required for lytic activity. This chain is Alpha-hemolysin (hly), found in Staphylococcus aureus.